The chain runs to 356 residues: MKELQITTGCLLLMVAAIGKTSAIYSMSETCEYTPDGFIADPNSCQSYGYCKNNQLVGTGKCPDGYLYNNKLGICDSPANVKCISDSKNACLHATDNSFVADPTNCNGYCYCSNKTATCTTCPEFQLFDSKQIKCVYALEKPECTADSICRLVPNAVYVGNPNECGEYISCFNGIGTEGRCASGYFNKQLGGCQTTNPCLASSPNPDIGLGVIENLADNNFVCQVNGGNPTEEKPVFISDGQTCMGYYKCTSRNGPGIWGKCPKGLHFNEGKCVTPFTFPCTFDRCGNLNREFVGAIRTECKNFLICKNETSQGMAYNYAKYIGLPCTDKNYPFFNEVSGTCEKTSPKSDTYKLCV.

The N-terminal stretch at 1 to 23 (MKELQITTGCLLLMVAAIGKTSA) is a signal peptide. Chitin-binding type-2 domains lie at 28 to 85 (SETC…KCIS), 88 to 146 (KNAC…ECTA), 147 to 201 (DSIC…PCLA), 220 to 283 (NFVC…PCTF), and 286 to 355 (CGNL…YKLC). Cys62 and Cys75 are joined by a disulfide. N-linked (GlcNAc...) asparagine glycosylation occurs at Asn114. 3 disulfide bridges follow: Cys122/Cys135, Cys181/Cys193, and Cys262/Cys273. The N-linked (GlcNAc...) asparagine glycan is linked to Asn309.

Glycosylated. As to expression, larval peritrophic membrane.

In terms of biological role, may have roles in the maintenance of peritrophic membrane structure and in the determination of the porosity of the peritrophic membrane. May bind chitin or related oligosaccharide structures. This chain is Peritrophin-44, found in Lucilia cuprina (Green bottle fly).